Consider the following 548-residue polypeptide: Myrosinase (548 aa).

An N-terminal signal peptide occupies residues 1-20 (MKLLHGLALVFLLAAASCKA). Disulfide bonds link C26-C458, C34-C454, and C226-C236. Q59 provides a ligand contact to substrate. Positions 76 and 90 each coordinate Zn(2+). N110 carries N-linked (GlcNAc...) asparagine glycosylation. 2 residues coordinate substrate: H161 and N206. L-ascorbate is bound at residue Q207. N-linked (GlcNAc...) asparagine glycosylation occurs at N240. R281 contributes to the L-ascorbate binding site. N-linked (GlcNAc...) asparagine glycosylation occurs at N331. Y352 serves as a coordination point for substrate. E429 (nucleophile) is an active-site residue. Substrate contacts are provided by residues W477 and 484-485 (EF). A glycan (N-linked (GlcNAc...) asparagine) is linked at N520.

This sequence belongs to the glycosyl hydrolase 1 family. Homodimer. As to expression, in vacuoles called myrosin grains of a certain class of cells, myrosin cells, distributed in the cotyledons and the axis of the embryo as well as in different organs of the growing plant.

Its subcellular location is the vacuole. It carries out the reaction a thioglucoside + H2O = a sugar + a thiol.. Its function is as follows. Degradation of glucosinolates (glucose residue linked by a thioglucoside bound to an amino acid derivative) to glucose, sulfate and any of the products: thiocyanates, isothiocyanates, nitriles, epithionitriles or oxazolidine-2-thiones. This is Myrosinase from Brassica napus (Rape).